Here is a 1818-residue protein sequence, read N- to C-terminus: Protein encore (1818 aa).

Disordered regions lie at residues 47–68 (ANSS…GVSG), 123–282 (SAAG…NSSN), and 317–413 (AERH…GFIS). The segment covering 52-66 (VGSGSGPGPGSGAGV) has biased composition (gly residues). Residues 124–137 (AAGSSNLGRQNSFG) show a composition bias toward polar residues. The span at 141 to 152 (GNMKGKHLTRSH) shows a compositional bias: basic residues. Low complexity-rich tracts occupy residues 156-179 (ESTS…QLQG), 186-199 (NNNN…AQSA), 217-233 (QQPQ…QQSV), and 266-282 (NSNG…NSSN). Residues Ser267 and Ser270 each carry the phosphoserine modification. A compositionally biased stretch (basic and acidic residues) spans 317-328 (AERHDRHERHEM). The residue at position 336 (Ser336) is a Phosphoserine. Positions 338–348 (NHDEEPYHYEP) are enriched in basic and acidic residues. 2 stretches are compositionally biased toward low complexity: residues 372–381 (NLGGSSSGSI) and 391–410 (NCNN…NTSG). The 65-residue stretch at 444–508 (RNILLKIEKD…QCVIVAVAKN (65 aa)) folds into the R3H domain. One can recognise an SUZ domain in the interval 510–576 (RIPEIRFQSL…ARSRIFSRTG (67 aa)). Ser535 is subject to Phosphoserine. Positions 557–568 (FEEREEDYDRAR) are enriched in basic and acidic residues. Disordered stretches follow at residues 557 to 806 (FEER…SYEQ), 885 to 916 (QEQE…SQTP), 936 to 959 (PYSQ…EEPK), 1176 to 1249 (GQAP…YNPS), 1332 to 1648 (AAAG…LVSH), and 1684 to 1709 (GAGA…RSHI). The segment covering 592–606 (YGGWEQQQQQQKQSQ) has biased composition (low complexity). Gly residues predominate over residues 644–655 (NYGGPPSSGGPG). A compositionally biased stretch (polar residues) spans 678–695 (QDSTGSTPWRLSPSSSGS). The segment covering 713–771 (SGNQYQSQNQGNSSSGGYNNYRKSSPHQQQQSQQQQQSQQHHQQQLQQPQQLHQQSSQQ) has biased composition (low complexity). Residues 772–784 (YATTELSCSSTES) are compositionally biased toward polar residues. Residues 893–904 (AGPSSSGSATSS) show a composition bias toward low complexity. The segment covering 1176-1197 (GQAPMQQQAPHTGAGTTTGPPT) has biased composition (low complexity). Residues 1220-1231 (SSNGSVVTSSAY) show a composition bias toward polar residues. Residues 1381-1392 (ASQSAPSTPAAP) show a composition bias toward low complexity. The segment covering 1430–1443 (TPHYYQGQNSNEGY) has biased composition (polar residues). The span at 1503 to 1521 (ASPSSVSLGGASSSGGANS) shows a compositional bias: low complexity. Composition is skewed to polar residues over residues 1554–1565 (AANSSPGVSSYE) and 1579–1596 (FRSQ…VSQR). Positions 1608 to 1633 (SHESSNNSPNSIVGSQSNSAANTPNA) are enriched in low complexity. Residues 1684–1705 (GAGASGAAGSNGGHQPGGGGGA) show a composition bias toward gly residues.

In terms of assembly, interacts with hfp; however, given the nuclear localization of hfp, the relevance of such interaction is unclear. Interacts with CycE, Cul1, and the SCF-proteasome complex. As to expression, expressed in all germline cells of the germarium including the stem cells and dividing cystocytes.

It is found in the cytoplasm. In terms of biological role, required for the regulation of germline mitosis, karyosome formation, and establishment of dorsoventral (DS) polarity of the egg and embryo. Involved in proper grk mRNA localization and translation in the oocyte. May control germline mitosis by facilitating the cyclin E (CycE) proteolysis by the SCF-ubiquitin-proteasome complex. The polypeptide is Protein encore (enc) (Drosophila melanogaster (Fruit fly)).